Here is a 119-residue protein sequence, read N- to C-terminus: Large ribosomal subunit protein bL19 (119 aa).

This sequence belongs to the bacterial ribosomal protein bL19 family.

This protein is located at the 30S-50S ribosomal subunit interface and may play a role in the structure and function of the aminoacyl-tRNA binding site. The sequence is that of Large ribosomal subunit protein bL19 from Saccharopolyspora erythraea (strain ATCC 11635 / DSM 40517 / JCM 4748 / NBRC 13426 / NCIMB 8594 / NRRL 2338).